Reading from the N-terminus, the 120-residue chain is Ribosomal protein eL22-like 1 (120 aa).

The protein belongs to the eukaryotic ribosomal protein eL22 family.

This Xenopus tropicalis (Western clawed frog) protein is Ribosomal protein eL22-like 1 (rpl22l1).